The following is a 291-amino-acid chain: GTPase Era (291 aa).

In terms of domain architecture, Era-type G spans 2 to 167 (KSGFVSIIGR…LDEIVKYLDE (166 aa)). A G1 region spans residues 10 to 17 (GRTNAGKS). 10-17 (GRTNAGKS) lines the GTP pocket. The segment at 36-40 (NATRR) is G2. The interval 57 to 60 (DTPG) is G3. Residues 57 to 61 (DTPGL) and 116 to 119 (NKVD) each bind GTP. The tract at residues 116-119 (NKVD) is G4. Residues 146-148 (YSS) are G5. One can recognise a KH type-2 domain in the interval 186–274 (YRDFILESIY…LLKLFVTVKK (89 aa)).

This sequence belongs to the TRAFAC class TrmE-Era-EngA-EngB-Septin-like GTPase superfamily. Era GTPase family. As to quaternary structure, monomer.

The protein resides in the cytoplasm. Its subcellular location is the cell inner membrane. Its function is as follows. An essential GTPase that binds both GDP and GTP, with rapid nucleotide exchange. Plays a role in 16S rRNA processing and 30S ribosomal subunit biogenesis and possibly also in cell cycle regulation and energy metabolism. The chain is GTPase Era from Campylobacter jejuni (strain RM1221).